The following is a 115-amino-acid chain: Large ribosomal subunit protein bL20 (115 aa).

It belongs to the bacterial ribosomal protein bL20 family.

Functionally, binds directly to 23S ribosomal RNA and is necessary for the in vitro assembly process of the 50S ribosomal subunit. It is not involved in the protein synthesizing functions of that subunit. The protein is Large ribosomal subunit protein bL20 of Bdellovibrio bacteriovorus (strain ATCC 15356 / DSM 50701 / NCIMB 9529 / HD100).